Reading from the N-terminus, the 365-residue chain is Class I histocompatibility antigen, Gogo-A*0201 alpha chain (365 aa).

The N-terminal stretch at 1 to 24 (MAVMAPRTLLLLLLGALALTQTWA) is a signal peptide. Positions 25 to 114 (GSHSMRYFST…LRGYYNQSEA (90 aa)) are alpha-1. At 25–308 (GSHSMRYFST…EPSSQPTIPI (284 aa)) the chain is on the extracellular side. Asn110 carries an N-linked (GlcNAc...) asparagine glycan. The segment at 115-206 (GSHTIQKMYG…ENGKETLQRT (92 aa)) is alpha-2. Intrachain disulfides connect Cys125–Cys188 and Cys227–Cys283. The interval 207–298 (DAPKTHMTHH…SLPKPLTLRW (92 aa)) is alpha-3. One can recognise an Ig-like C1-type domain in the interval 209-295 (PKTHMTHHAV…QHESLPKPLT (87 aa)). Residues 299–308 (EPSSQPTIPI) are connecting peptide. A helical membrane pass occupies residues 309-332 (VGIIAGLVLFGAVIAGAVIAAVRW). The Cytoplasmic segment spans residues 333 to 365 (RRKSSDRKGGSYSQAASSDSAQGSDVSLTACKV). The tract at residues 338–365 (DRKGGSYSQAASSDSAQGSDVSLTACKV) is disordered. Over residues 342–359 (GSYSQAASSDSAQGSDVS) the composition is skewed to low complexity. Ser343 is modified (phosphoserine). Position 344 is a phosphotyrosine (Tyr344). Phosphoserine is present on residues Ser345, Ser349, Ser350, Ser352, Ser356, and Ser359.

This sequence belongs to the MHC class I family. Heterodimer of an alpha chain and a beta chain (beta-2-microglobulin).

Its subcellular location is the membrane. In terms of biological role, involved in the presentation of foreign antigens to the immune system. In Gorilla gorilla gorilla (Western lowland gorilla), this protein is Class I histocompatibility antigen, Gogo-A*0201 alpha chain.